The sequence spans 613 residues: DNA mismatch repair protein MutL (613 aa).

This sequence belongs to the DNA mismatch repair MutL/HexB family.

In terms of biological role, this protein is involved in the repair of mismatches in DNA. It is required for dam-dependent methyl-directed DNA mismatch repair. May act as a 'molecular matchmaker', a protein that promotes the formation of a stable complex between two or more DNA-binding proteins in an ATP-dependent manner without itself being part of a final effector complex. This Flavobacterium psychrophilum (strain ATCC 49511 / DSM 21280 / CIP 103535 / JIP02/86) protein is DNA mismatch repair protein MutL.